Consider the following 558-residue polypeptide: Tektin-5 (558 aa).

A coiled-coil region spans residues Ile347 to Ala381.

The protein belongs to the tektin family. Microtubule inner protein component of sperm flagellar doublet microtubules. Interacts with TEKT3. Ubiquitinated, leading to its degradation. Deubiquitinated by USP16, promoting its stability. Specifically expressed in testis.

It localises to the cytoplasm. The protein localises to the cytoskeleton. It is found in the flagellum axoneme. Functionally, sperm-specific microtubule inner protein (MIP) part of the dynein-decorated doublet microtubules (DMTs) in flagellar axoneme. Forms an extensive interaction network in different conformations that reinforces the helix bundle composed by other tektin proteins (TEKT1 to TEKT4) and MIPs to anchor the tektin bundle onto the tubulin wall of A-tubule of the sperm flagellum. This chain is Tektin-5, found in Rattus norvegicus (Rat).